Reading from the N-terminus, the 107-residue chain is UPF0060 membrane protein PSHAa1175 (107 aa).

Transmembrane regions (helical) follow at residues 3–23 (IFGL…LPYL), 30–50 (SVWL…LLSL), 60–80 (AAYG…VDGI), and 84–104 (TWDL…MFAP).

The protein belongs to the UPF0060 family.

It is found in the cell inner membrane. In Pseudoalteromonas translucida (strain TAC 125), this protein is UPF0060 membrane protein PSHAa1175.